Consider the following 419-residue polypeptide: POU domain, class 4, transcription factor 1 (419 aa).

The short motif at 57–66 (RAEALAAVDI) is the POU-IV box element. Disordered stretches follow at residues 94 to 117 (STVP…GDLL) and 131 to 197 (AGGA…HSLG). The span at 99–108 (AHHHHHHHHH) shows a compositional bias: basic residues. Positions 131 to 184 (AGGAGAAAGGGGAHDGPGGGGGPGGGGGPGGGPGGGGGGGPGGGGGGPGGGLLG) are enriched in gly residues. One can recognise a POU-specific domain in the interval 261-338 (SDTDPRELEA…LQAWLEEAEG (78 aa)). Residues 356–415 (KRKRTSIAAPEKRSLEAYFAVQPRPSSEKIAAIAEKLDLKKNVVRVWFCNQRQKQKRMKF) constitute a DNA-binding region (homeobox).

The protein belongs to the POU transcription factor family. Class-4 subfamily. Interacts (via N-terminus) with RIT2; the interaction controls POU4F1 transactivation activity on some neuronal target genes. Isoform 1 interacts with POU4F2; this interaction inhibits both POU4F1 DNA-binding and transcriptional activities. Isoform 1 interacts (C-terminus) with ESR1 (via DNA-binding domain); this interaction decreases the estrogen receptor ESR1 transcriptional activity in a DNA- and ligand 17-beta-estradiol-independent manner. Expressed in the brain and the retina. Present in the developing brain, spinal cord and eye.

The protein resides in the nucleus. It localises to the cytoplasm. Its function is as follows. Multifunctional transcription factor with different regions mediating its different effects. Acts by binding (via its C-terminal domain) to sequences related to the consensus octamer motif 5'-ATGCAAAT-3' in the regulatory regions of its target genes. Regulates the expression of specific genes involved in differentiation and survival within a subset of neuronal lineages. It has been shown that activation of some of these genes requires its N-terminal domain, maybe through a neuronal-specific cofactor. Activates BCL2 expression and protects neuronal cells from apoptosis (via the N-terminal domain). Induces neuronal process outgrowth and the coordinate expression of genes encoding synaptic proteins. Exerts its major developmental effects in somatosensory neurons and in brainstem nuclei involved in motor control. Stimulates the binding affinity of the nuclear estrogene receptor ESR1 to DNA estrogen response element (ERE), and hence modulates ESR1-induced transcriptional activity. May positively regulate POU4F2 and POU4F3. Regulates dorsal root ganglion sensory neuron specification and axonal projection into the spinal cord. Plays a role in TNFSF11-mediated terminal osteoclast differentiation. Negatively regulates its own expression interacting directly with a highly conserved autoregulatory domain surrounding the transcription initiation site. Able to act as transcription factor, cannot regulate the expression of the same subset of genes than isoform 1. Does not have antiapoptotic effect on neuronal cells. In Homo sapiens (Human), this protein is POU domain, class 4, transcription factor 1.